The sequence spans 645 residues: Glucans biosynthesis glucosyltransferase H (645 aa).

Residues 1–12 show a composition bias toward polar residues; the sequence is MDGTVTLSSTPT. The segment at 1–22 is disordered; it reads MDGTVTLSSTPTAIPPVSALDA. The next 7 membrane-spanning stretches (helical) occupy residues 64-84, 98-118, 423-443, 465-485, 504-524, 559-579, and 580-600; these read LIGG…SVLW, LFTL…AGFV, APMW…GVGI, AIWI…LGYI, AVSI…VMYL, YGGL…VSPA, and LAAW…VVAL.

It belongs to the glycosyltransferase 2 family. OpgH subfamily.

Its subcellular location is the cell inner membrane. The protein operates within glycan metabolism; osmoregulated periplasmic glucan (OPG) biosynthesis. Involved in the biosynthesis of osmoregulated periplasmic glucans (OPGs). The sequence is that of Glucans biosynthesis glucosyltransferase H from Xanthomonas oryzae pv. oryzae (strain MAFF 311018).